We begin with the raw amino-acid sequence, 185 residues long: MSNAEIFAASGEGVNPIVPNIWDTALVLIGFAILLFIVIKFVVPMFEKTFAERTEAIEGGIAKAEEAQAEATAALEEYKQQLAEARAEANKIREDARAEGAQILADLKEKAASESARITEQAQVAIAAERQAAVVSLRSEVGSLATTLAGRIVGESLQDDARSNRVVDRFLADLEANSKSEGAAK.

The helical transmembrane segment at 26 to 46 threads the bilayer; sequence LVLIGFAILLFIVIKFVVPMF.

This sequence belongs to the ATPase B chain family. F-type ATPases have 2 components, F(1) - the catalytic core - and F(0) - the membrane proton channel. F(1) has five subunits: alpha(3), beta(3), gamma(1), delta(1), epsilon(1). F(0) has three main subunits: a(1), b(2) and c(10-14). The alpha and beta chains form an alternating ring which encloses part of the gamma chain. F(1) is attached to F(0) by a central stalk formed by the gamma and epsilon chains, while a peripheral stalk is formed by the delta and b chains.

Its subcellular location is the cell membrane. F(1)F(0) ATP synthase produces ATP from ADP in the presence of a proton or sodium gradient. F-type ATPases consist of two structural domains, F(1) containing the extramembraneous catalytic core and F(0) containing the membrane proton channel, linked together by a central stalk and a peripheral stalk. During catalysis, ATP synthesis in the catalytic domain of F(1) is coupled via a rotary mechanism of the central stalk subunits to proton translocation. In terms of biological role, component of the F(0) channel, it forms part of the peripheral stalk, linking F(1) to F(0). This chain is ATP synthase subunit b, found in Renibacterium salmoninarum (strain ATCC 33209 / DSM 20767 / JCM 11484 / NBRC 15589 / NCIMB 2235).